The following is a 632-amino-acid chain: Topoisomerase I damage affected protein 7 (632 aa).

The span at 1-18 (MNSNSTIGRTTLGESDTI) shows a compositional bias: polar residues. Disordered stretches follow at residues 1–33 (MNSN…NSRS), 87–109 (TLVS…QYDP), 236–267 (SPST…SSTN), 295–322 (PTSS…DDTT), and 335–359 (QSTT…TSPI). Asn-4 is a glycosylation site (N-linked (GlcNAc...) asparagine). 2 stretches are compositionally biased toward low complexity: residues 19–33 (SLSF…NSRS) and 87–108 (TLVS…SQYD). An N-linked (GlcNAc...) asparagine glycan is attached at Asn-253. The helical transmembrane segment at 453 to 473 (IVGSVVGSVGGILICVLVVWF) threads the bilayer. Residue Asn-488 is glycosylated (N-linked (GlcNAc...) asparagine). The span at 506–537 (QAKEASLQAQDSGSQQRNTETASANNPFSNEF) shows a compositional bias: polar residues. Residues 506–551 (QAKEASLQAQDSGSQQRNTETASANNPFSNEFNFKARGNPPPVPPP) are disordered. Lys-508 participates in a covalent cross-link: Glycyl lysine isopeptide (Lys-Gly) (interchain with G-Cter in ubiquitin). Residues Asn-553, Asn-558, and Asn-622 are each glycosylated (N-linked (GlcNAc...) asparagine). Ser-624 carries the phosphoserine modification.

Belongs to the TDA7 family.

Its subcellular location is the vacuole membrane. In Saccharomyces cerevisiae (strain Lalvin EC1118 / Prise de mousse) (Baker's yeast), this protein is Topoisomerase I damage affected protein 7 (TDA7).